Consider the following 219-residue polypeptide: Counting factor-associated protein C (219 aa).

An N-terminal signal peptide occupies residues 1–16; sequence MKVLILLVSLISVCFS. 2 N-linked (GlcNAc...) asparagine glycosylation sites follow: Asn74 and Asn123.

The protein localises to the secreted. This Dictyostelium discoideum (Social amoeba) protein is Counting factor-associated protein C (cfaC).